A 407-amino-acid polypeptide reads, in one-letter code: MSDIDNNLTSQTHQQATHQQETLDLSIALLERPSVTPNDDGCQDILSERLTQAGFDCEFMYYGDRQAKGEHAEVKNLWARRGTSNPVICFAGHTDVVPTGDEKNWTYPPFTPTIADGYLWARGAADMKTGIAAFTIAAERFVANHPQHNGSIAFLITSDEEGPSINGTVKVIETLEARQEKITYCLVGEPSSTDTLGDIIKNGRRGSLGAVLTVTGKQGHVAYPHLASNPIHAAMSALSELTNASWDNGNDYFPATSLQISNINGGTGATNVIPETLEVVFNFRFSTETTEDELKAKTHAIFDKYFKDSKAKYDIHWKLSGQPFLTPEGKLVSACQQAIKSVTGTDTTLSTSGGTSDGRFIAPTGAQVVELGVRNATIHQVDEKVEVDDLGRLAQIYERILENLLLD.

Polar residues predominate over residues methionine 1–serine 10. Positions methionine 1 to glutamine 20 are disordered. Residues glutamine 11–glutamine 20 are compositionally biased toward low complexity. Histidine 93 provides a ligand contact to Zn(2+). Aspartate 95 is a catalytic residue. Aspartate 126 is a Zn(2+) binding site. The active-site Proton acceptor is glutamate 160. Residues glutamate 161, glutamate 189, and histidine 379 each contribute to the Zn(2+) site.

The protein belongs to the peptidase M20A family. DapE subfamily. In terms of assembly, homodimer. Zn(2+) is required as a cofactor. Co(2+) serves as cofactor.

It catalyses the reaction N-succinyl-(2S,6S)-2,6-diaminopimelate + H2O = (2S,6S)-2,6-diaminopimelate + succinate. It participates in amino-acid biosynthesis; L-lysine biosynthesis via DAP pathway; LL-2,6-diaminopimelate from (S)-tetrahydrodipicolinate (succinylase route): step 3/3. Catalyzes the hydrolysis of N-succinyl-L,L-diaminopimelic acid (SDAP), forming succinate and LL-2,6-diaminopimelate (DAP), an intermediate involved in the bacterial biosynthesis of lysine and meso-diaminopimelic acid, an essential component of bacterial cell walls. The polypeptide is Succinyl-diaminopimelate desuccinylase (Psychrobacter arcticus (strain DSM 17307 / VKM B-2377 / 273-4)).